The sequence spans 374 residues: Layilin (374 aa).

An N-terminal signal peptide occupies residues 1–24 (MQPGPALQAVLLAVLLSEPRSSKG). Over 25-221 (RLLSGQLVCR…TKETFKESRE (197 aa)) the chain is Extracellular. Residues 37–177 (TRRPCYKVIY…CNMKNNFICK (141 aa)) form the C-type lectin domain. 2 cysteine pairs are disulfide-bonded: Cys63-Cys176 and Cys142-Cys168. Asn109 carries an N-linked (GlcNAc...) asparagine glycan. The segment at 184 to 212 (STTPSIRPGGEATEPPTPVLPEETQKEDT) is disordered. A helical transmembrane segment spans residues 222 to 242 (AALNLAYILIPSIPLFLLLVV). Residues 243 to 374 (TSAACWVWIC…SGWVENEIYY (132 aa)) are Cytoplasmic-facing. Phosphoserine is present on residues Ser279 and Ser292. Positions 323–367 (DYDNMAVNPSESGFVTLASMESGFVTNDIYEFSPDRMGRSKESGW) are interaction with NF2. An interaction with TLN1 region spans residues 330–374 (NPSESGFVTLASMESGFVTNDIYEFSPDRMGRSKESGWVENEIYY). Repeat copies occupy residues 333-337 (ESGFV), 343-347 (ESGFV), 349-352 (NDIY), 364-368 (ESGWV), and 370-373 (NEIY). Positions 333–368 (ESGFVTLASMESGFVTNDIYEFSPDRMGRSKESGWV) are 3 X 5 AA repeats of E-S-G-X-V. A 2 X 4 AA repeats of N-X-I-Y region spans residues 349–373 (NDIYEFSPDRMGRSKESGWVENEIY).

In terms of assembly, interacts with NF2 and RDX. Interacts with TLN1. As to expression, widely expressed. Abundant in the ovary.

It localises to the membrane. Its function is as follows. Receptor for hyaluronate. In Cricetulus griseus (Chinese hamster), this protein is Layilin (LAYN).